The following is an 818-amino-acid chain: Protein TOC75-3, chloroplastic (818 aa).

A chloroplast-targeting transit peptide spans 1-79 (MAAFSVNGQL…LKNLAKPLAV (79 aa)). The span at 15-41 (TSSTASTSLSSRRKFLSPSSSRLPRIS) shows a compositional bias: low complexity. The tract at residues 15 to 67 (TSSTASTSLSSRRKFLSPSSSRLPRISTQSPRVPSIKCSKSLPNRDTETSSKD) is disordered. The span at 57–67 (PNRDTETSSKD) shows a compositional bias: basic and acidic residues. Residues 80–140 (ASVSSAASFF…KLFSPSPAVA (61 aa)) constitute a chloroplast; outer membrane transit peptide. POTRA domains lie at 141–246 (DEEQ…FAES), 247–364 (TWQS…VVEG), and 365–448 (DITQ…LKEL). Topologically, residues 141–473 (DEEQSPDWDS…GRGGAPTLAS (333 aa)) are chloroplast intermembrane. A beta stranded membrane pass occupies residues 474 to 482 (FQPGGSVTF). The Cytoplasmic segment spans residues 483–509 (EHRNLQGLNRSLMGSVTTSNFLNPQDD). Residues 510–518 (LSFKLEYVH) form a beta stranded membrane-spanning segment. The Chloroplast intermembrane portion of the chain corresponds to 519–562 (PYLDGVYNPRNRTFKTSCFNSRKLSPVFTGGPGVEEVPPIWVDR). A beta stranded membrane pass occupies residues 563–570 (AGVKANIT). Residues 571 to 578 (ENFTRQSK) lie on the Cytoplasmic side of the membrane. Residues 579–586 (FTYGLVME) traverse the membrane as a beta stranded segment. At 587 to 693 (EITTRDESSH…VEQGAGKSPP (107 aa)) the chain is on the chloroplast intermembrane side. The beta stranded transmembrane segment at 694–702 (PVLVLHGHY) threads the bilayer. Residues 703 to 714 (GGCVGDLPSYDA) lie on the Cytoplasmic side of the membrane. The chain crosses the membrane as a beta stranded span at residues 715-723 (FVLGGPYSV). Topologically, residues 724-785 (RGYNMGELGA…VYRRTGQGSS (62 aa)) are chloroplast intermembrane. The chain crosses the membrane as a beta stranded span at residues 786–792 (YGAGVKL). Topologically, residues 793–806 (GLVRAEYAVDHNNG) are cytoplasmic. Residues 807-814 (TGALFFRF) form a beta stranded membrane-spanning segment. Residues 815–818 (GERY) are Chloroplast intermembrane-facing.

It belongs to the TOC75 family. In terms of assembly, part of the TOC core complex that includes a protein for the specific recognition of transit peptides surrounded by a ring composed of four proteins forming translocation channels, and four to five GTP-binding proteins providing energy. This core complex can interact with components of the TIC complex to form a larger import complex. Chloroplastic protein precursors such as prSS (precursor of the RuBisCO small subunit) also interact with these complexes. The TOC complex contains a specific subset of polar lipids such as digalactosyldiacylglyceride (DGDG), phosphatidylcholine (PC) and phosphatidylglycerol (PG). TOC75-3 interacts with TOC34/OEP34, TOC159/TOC86, TOC132 and TOC120. Interacts with SP1. Interacts with TIC236. Mostly expressed in young and actively dividing photosynthetic tissues and, to a lower extent, in old leaves and roots. Particularly low levels in leaves after etiolation.

It is found in the plastid. The protein localises to the chloroplast outer membrane. Essential protein. Mediates the insertion of proteins targeted to the outer membrane of chloroplasts. Required for the import of protein precursors into chloroplasts. Forms the voltage-dependent preprotein translocation channels (hydrophilic beta barrel) of the TOC complex in the chloroplastic outer membrane. In Arabidopsis thaliana (Mouse-ear cress), this protein is Protein TOC75-3, chloroplastic.